We begin with the raw amino-acid sequence, 338 residues long: 4-hydroxy-2-oxovalerate aldolase (338 aa).

Residues 6–256 (IHIVDTTLRD…RTGVDFYKVM (251 aa)) form the Pyruvate carboxyltransferase domain. Substrate is bound at residue 14-15 (RD). Residue aspartate 15 participates in Mn(2+) binding. The active-site Proton acceptor is the histidine 18. Residues serine 168 and histidine 195 each contribute to the substrate site. The Mn(2+) site is built by histidine 195 and histidine 197. Tyrosine 286 lines the substrate pocket.

Belongs to the 4-hydroxy-2-oxovalerate aldolase family.

It carries out the reaction (S)-4-hydroxy-2-oxopentanoate = acetaldehyde + pyruvate. This is 4-hydroxy-2-oxovalerate aldolase from Moorella thermoacetica (strain ATCC 39073 / JCM 9320).